The primary structure comprises 90 residues: uncharacterized protein (90 aa).

The chain crosses the membrane as a helical span at residues histidine 15–threonine 34. A disordered region spans residues threonine 34–aspartate 65. Polar residues predominate over residues lysine 43 to aspartate 60. Asparagine 44 is a glycosylation site (N-linked (GlcNAc...) asparagine).

The protein resides in the mitochondrion membrane. This is an uncharacterized protein from Saccharomyces cerevisiae (strain ATCC 204508 / S288c) (Baker's yeast).